A 216-amino-acid polypeptide reads, in one-letter code: Ribose-5-phosphate isomerase A (216 aa).

Substrate contacts are provided by residues 26–29 (TGST), 79–82 (DGAD), and 92–95 (KGGG). The active-site Proton acceptor is the Glu-101. A substrate-binding site is contributed by Lys-119.

It belongs to the ribose 5-phosphate isomerase family. In terms of assembly, homodimer.

It carries out the reaction aldehydo-D-ribose 5-phosphate = D-ribulose 5-phosphate. It functions in the pathway carbohydrate degradation; pentose phosphate pathway; D-ribose 5-phosphate from D-ribulose 5-phosphate (non-oxidative stage): step 1/1. In terms of biological role, catalyzes the reversible conversion of ribose-5-phosphate to ribulose 5-phosphate. The sequence is that of Ribose-5-phosphate isomerase A from Legionella pneumophila subsp. pneumophila (strain Philadelphia 1 / ATCC 33152 / DSM 7513).